The following is a 227-amino-acid chain: Large ribosomal subunit protein uL3 (227 aa).

Position 158 is an N5-methylglutamine (Gln158).

The protein belongs to the universal ribosomal protein uL3 family. Part of the 50S ribosomal subunit. Forms a cluster with proteins L14 and L19. Methylated by PrmB.

One of the primary rRNA binding proteins, it binds directly near the 3'-end of the 23S rRNA, where it nucleates assembly of the 50S subunit. The sequence is that of Large ribosomal subunit protein uL3 from Polaromonas sp. (strain JS666 / ATCC BAA-500).